A 100-amino-acid chain; its full sequence is Guanine nucleotide-binding protein subunit gamma 2 (100 aa).

N-acetylmethionine is present on methionine 1. The stretch at 19–55 (TRGKHRIQAELKRLEQEARFLEEELEQLEKMDNASAS) forms a coiled coil. The G protein gamma domain occupies 21–100 (GKHRIQAELK…EAKRCGCSIL (80 aa)). Residues 90-96 (KEAKRCG) form a regulates lipidation and cell membrane subcellular localization region. Cysteine 95 is lipidated: S-palmitoyl cysteine. Residue cysteine 97 is modified to Cysteine methyl ester. Residue cysteine 97 is the site of S-farnesyl cysteine attachment. The propeptide at 98-100 (SIL) is removed in mature form.

As to quaternary structure, g proteins are composed of 3 units, alpha, beta and gamma. GPG1 interacts with the beta subunit GB1. The dimer GB1-GG2 interacts with NDL1, NDL2 and NDL3. Binds to NUDT7. As to expression, mostly expressed in roots (excluded from the stele), seedlings (especially at the hypocotyl/root junction), floral stems, floral buds, flowers and siliques, and, to a lower extent, in leaves (restricted to guard cells). Also present in hydathods.

The protein resides in the cell membrane. Guanine nucleotide-binding proteins (G proteins) are involved as a modulator or transducer in various transmembrane signaling systems. The beta and gamma chains are required for the GTPase activity, for replacement of GDP by GTP, and for G protein-effector interaction. Involved in the abscisic acid (ABA) and ethylene signaling pathways. Regulates basipetal transport of auxin (IAA) in roots and hypocotyls, and thus modulates root architecture (e.g. lateral root formation). The heterotrimeric G-protein controls defense responses to necrotrophic and vascular fungi probably by modulating cell wall-related genes expression; involved in resistance to Plectosphaerella cucumerina. The sequence is that of Guanine nucleotide-binding protein subunit gamma 2 (GG2) from Arabidopsis thaliana (Mouse-ear cress).